Reading from the N-terminus, the 444-residue chain is MLTSDRLRGMLRRLPGRLPDAVGVVRHAVPRFWNNNGFAIAASLTYTTLLALVPLLTVTFAIFSAFPAYGRLRDTARELIFDSLAPSVSDEVQAYFDQFISNAAALTGFGVIGLSLTSILLFFSVEAALNVIFRATEPRPLVIRLLSFWAVLTIMPLLLGASLSVTSGVVADLQATGRDAVTVLRFMLPGLLEAAAFTLMFLMIPNREVQWFDALVGGIAAALLMEVSKVGFGLYIAAFPTYETIYGALSVIPIFLFWLYTVWSVVLFGAEITATLPEWRAGKITQVGPEGLLSAQRIVVAVAILHELQRAARLGVGIRRGTLSTRVPVGANVIDGMLEQLQAAHWVARTRDGAWVATRNLSDATVDDLRHSLGMAIRGNLRSVGHLSAGWQNRLADLFERAEAADREVLGVCFADLFADPPSGQPSGQVETAVRQRTGLQGRI.

6 helical membrane passes run 49 to 69, 103 to 123, 145 to 165, 186 to 206, 219 to 239, and 248 to 268; these read LLAL…FPAY, AAAL…LLFF, LLSF…SLSV, FMLP…MIPN, IAAA…IAAF, and ALSV…VVLF. A disordered region spans residues 423 to 444; that stretch reads SGQPSGQVETAVRQRTGLQGRI.

Belongs to the UPF0761 family.

It localises to the cell inner membrane. The sequence is that of UPF0761 membrane protein RC1_0578 from Rhodospirillum centenum (strain ATCC 51521 / SW).